Reading from the N-terminus, the 579-residue chain is Glutamate--tRNA ligase (579 aa).

The 'HIGH' region motif lies at 114 to 124; it reads PNPNGPWHIGH.

The protein belongs to the class-I aminoacyl-tRNA synthetase family. Glutamate--tRNA ligase type 2 subfamily.

Its subcellular location is the cytoplasm. It carries out the reaction tRNA(Glu) + L-glutamate + ATP = L-glutamyl-tRNA(Glu) + AMP + diphosphate. Catalyzes the attachment of glutamate to tRNA(Glu) in a two-step reaction: glutamate is first activated by ATP to form Glu-AMP and then transferred to the acceptor end of tRNA(Glu). This chain is Glutamate--tRNA ligase, found in Haloarcula marismortui (strain ATCC 43049 / DSM 3752 / JCM 8966 / VKM B-1809) (Halobacterium marismortui).